Consider the following 249-residue polypeptide: Voltage-gated potassium channel subunit beta-3 (249 aa).

16 residues coordinate NADP(+): N44, S74, R75, Q100, W129, S130, P131, L132, A133, C134, K140, K150, G209, S211, Q215, and E218.

This sequence belongs to the shaker potassium channel beta subunit family. In terms of assembly, forms heteromultimeric complex with alpha subunits. Interacts with KCNA5 and KCNB2. As to expression, strong expression in brain, with highest levels in neocortical and allocortical regions, hippocampus, olfactory bulb and cerebellum. Also strong in kidney. Weak expression in lung, skeletal muscle and heart.

The protein localises to the cytoplasm. Functionally, regulatory subunit of the voltage-gated potassium (Kv) channels composed of pore-forming and potassium-conducting alpha subunits and of regulatory beta subunit. The beta-3/KCNAB3 subunit may mediate closure of potassium channels. Enhances the expression of Kv2.2/KCNB2 alpha subunit-containing Kv channels but not Kv2.1/KCNB1. May display nicotinamide adenine dinucleotide phosphate (NADPH)-dependent aldoketoreductase activity. The binding of oxidized and reduced NADP(H) cofactors may be required for the regulation of potassium channel activity. The sequence is that of Voltage-gated potassium channel subunit beta-3 from Mus musculus (Mouse).